The chain runs to 458 residues: Bifunctional protein GlmU (458 aa).

Residues 1–230 (MLQIDVVILA…DWEVVGVNDK (230 aa)) form a pyrophosphorylase region. UDP-N-acetyl-alpha-D-glucosamine contacts are provided by residues 9 to 12 (LAAG), Lys-23, Gln-75, and 80 to 81 (GT). Asp-104 is a binding site for Mg(2+). UDP-N-acetyl-alpha-D-glucosamine-binding residues include Gly-139, Glu-155, Asn-170, and Asn-228. Asn-228 is a Mg(2+) binding site. A linker region spans residues 231 to 251 (IQLSTLERAHQQDVAKGLMEQ). The N-acetyltransferase stretch occupies residues 252–458 (GVMFADPARF…NWKRPKKNKD (207 aa)). Arg-334 and Lys-352 together coordinate UDP-N-acetyl-alpha-D-glucosamine. His-364 serves as the catalytic Proton acceptor. 2 residues coordinate UDP-N-acetyl-alpha-D-glucosamine: Tyr-367 and Asn-378. Residues Ala-381, 387–388 (NY), Ser-406, Ala-424, and Arg-441 each bind acetyl-CoA.

This sequence in the N-terminal section; belongs to the N-acetylglucosamine-1-phosphate uridyltransferase family. The protein in the C-terminal section; belongs to the transferase hexapeptide repeat family. As to quaternary structure, homotrimer. Mg(2+) serves as cofactor.

The protein localises to the cytoplasm. It catalyses the reaction alpha-D-glucosamine 1-phosphate + acetyl-CoA = N-acetyl-alpha-D-glucosamine 1-phosphate + CoA + H(+). The enzyme catalyses N-acetyl-alpha-D-glucosamine 1-phosphate + UTP + H(+) = UDP-N-acetyl-alpha-D-glucosamine + diphosphate. Its pathway is nucleotide-sugar biosynthesis; UDP-N-acetyl-alpha-D-glucosamine biosynthesis; N-acetyl-alpha-D-glucosamine 1-phosphate from alpha-D-glucosamine 6-phosphate (route II): step 2/2. It participates in nucleotide-sugar biosynthesis; UDP-N-acetyl-alpha-D-glucosamine biosynthesis; UDP-N-acetyl-alpha-D-glucosamine from N-acetyl-alpha-D-glucosamine 1-phosphate: step 1/1. It functions in the pathway bacterial outer membrane biogenesis; LPS lipid A biosynthesis. Functionally, catalyzes the last two sequential reactions in the de novo biosynthetic pathway for UDP-N-acetylglucosamine (UDP-GlcNAc). The C-terminal domain catalyzes the transfer of acetyl group from acetyl coenzyme A to glucosamine-1-phosphate (GlcN-1-P) to produce N-acetylglucosamine-1-phosphate (GlcNAc-1-P), which is converted into UDP-GlcNAc by the transfer of uridine 5-monophosphate (from uridine 5-triphosphate), a reaction catalyzed by the N-terminal domain. This chain is Bifunctional protein GlmU, found in Nitrosomonas eutropha (strain DSM 101675 / C91 / Nm57).